The chain runs to 190 residues: Peptidyl-tRNA hydrolase (190 aa).

TRNA is bound at residue Tyr-14. His-19 functions as the Proton acceptor in the catalytic mechanism. TRNA contacts are provided by Tyr-64, Asn-66, and Asn-112.

Belongs to the PTH family. In terms of assembly, monomer.

It localises to the cytoplasm. It carries out the reaction an N-acyl-L-alpha-aminoacyl-tRNA + H2O = an N-acyl-L-amino acid + a tRNA + H(+). In terms of biological role, hydrolyzes ribosome-free peptidyl-tRNAs (with 1 or more amino acids incorporated), which drop off the ribosome during protein synthesis, or as a result of ribosome stalling. Functionally, catalyzes the release of premature peptidyl moieties from peptidyl-tRNA molecules trapped in stalled 50S ribosomal subunits, and thus maintains levels of free tRNAs and 50S ribosomes. This is Peptidyl-tRNA hydrolase from Chlorobium luteolum (strain DSM 273 / BCRC 81028 / 2530) (Pelodictyon luteolum).